We begin with the raw amino-acid sequence, 143 residues long: Snake venom vascular endothelial growth factor toxin (143 aa).

The signal sequence occupies residues 1–24 (MAAYLLAVAILFCIQGWPSATVQG). A Pyrrolidone carboxylic acid modification is found at Q25. 3 disulfide bridges follow: C38–C80, C69–C115, and C73–C117. A disordered region spans residues 115–143 (CECRPRSPGDVNNGRNPEEGEPRARFPFV). Over residues 130–143 (NPEEGEPRARFPFV) the composition is skewed to basic and acidic residues.

Belongs to the PDGF/VEGF growth factor family. Snake venom VEGF subfamily. In terms of assembly, homodimer; disulfide-linked. Interacts with VEGF receptor-2 (KDR). In terms of processing, the N-terminus is blocked for N-terminal sequencing, suggesting a Pyrrolidone carboxylic acid at Gln-25. In terms of tissue distribution, expressed by the venom gland.

It localises to the secreted. In terms of biological role, snake venom VEGFs that may contribute to venom dispersion and prey subjugation by inducing vascular permeability and hypotension. This protein induces an increase in capillary permeability when intradermally injected into mice. Also provokes a drastic hypotensive effect after intravenous injection. The hypotension is mediated by nitric oxide (NO), which is produced by VEGF-activated endothelium NO synthase. Also induces angiogenesis in vitro. Unlike other crotalid VEGFs, this protein interacts with VEGF receptor-2 (KDR) with a high affinity (Kd=413 pM), whereas no interaction is detected with VEGF receptor-1 (FLT1). The chain is Snake venom vascular endothelial growth factor toxin from Protobothrops jerdonii (Jerdon's pitviper).